A 423-amino-acid chain; its full sequence is Maintenance of mitochondrial morphology protein 1 (423 aa).

The Lumenal segment spans residues 1 to 20 (MTIPAPIPDKAESSLSFTQG). A helical membrane pass occupies residues 21–41 (LLLGQLSIVILIGAFIKFFIF). Residues 42 to 423 (GDPPSPDVTA…PGSMPGLSMT (382 aa)) are Cytoplasmic-facing. The 213-residue stretch at 115–327 (QPESLDWFNV…EPRFQQIELP (213 aa)) folds into the SMP-LTD domain. Disordered regions lie at residues 332 to 372 (RKKN…KEVE) and 387 to 423 (SLDV…LSMT). Residues 355 to 372 (RSRDVERDLREEARKEVE) are compositionally biased toward basic and acidic residues.

It belongs to the MMM1 family. As to quaternary structure, homodimer. Component of the ER-mitochondria encounter structure (ERMES) or MDM complex, composed of MMM1, MDM10, MDM12 and MDM34. An MMM1 homodimer associates with one molecule of MDM12 on each side in a pairwise head-to-tail manner, and the SMP-LTD domains of MMM1 and MDM12 generate a continuous hydrophobic tunnel for phospholipid trafficking.

The protein localises to the endoplasmic reticulum membrane. Functionally, component of the ERMES/MDM complex, which serves as a molecular tether to connect the endoplasmic reticulum (ER) and mitochondria. Components of this complex are involved in the control of mitochondrial shape and protein biogenesis, and function in nonvesicular lipid trafficking between the ER and mitochondria. The MDM12-MMM1 subcomplex functions in the major beta-barrel assembly pathway that is responsible for biogenesis of all outer membrane beta-barrel proteins, and acts in a late step after the SAM complex. The MDM10-MDM12-MMM1 subcomplex further acts in the TOM40-specific pathway after the action of the MDM12-MMM1 complex. Essential for establishing and maintaining the structure of mitochondria and maintenance of mtDNA nucleoids. The protein is Maintenance of mitochondrial morphology protein 1 of Botryotinia fuckeliana (strain B05.10) (Noble rot fungus).